Reading from the N-terminus, the 984-residue chain is Vacuolar sorting protein 3 (984 aa).

A CNH domain is found at 21-339; it reads KIRALSLSPI…GCGPSLLAAD (319 aa). Residues 663–844 form a CHCR repeat; it reads VLTSDKRTEE…YLDPQNGKEP (182 aa).

Belongs to the TRAP1 family. As to quaternary structure, component of the class C core vacuole/endosome tethering (CORVET) complex. Their common core is composed of the class C Vps core proteins VPS11, VCL1, VPS18 and VPS33, which in CORVET further associates with VPS3. Interacts directly with VPS11. Binds to RABF2A and RABF2B.

Its subcellular location is the endosome membrane. The protein localises to the cytoplasm. Essential protein required during embryogenesis. Believed to act as a component of the putative class C core vacuole/endosome tethering (CORVET) endosomal tethering complexes. CORVET is required for vacuolar transport of SYP22. Involved in root development. Plays a role in vesicle-mediated protein trafficking of the endocytic membrane transport pathway. The sequence is that of Vacuolar sorting protein 3 from Arabidopsis thaliana (Mouse-ear cress).